Reading from the N-terminus, the 411-residue chain is C6 finger domain transcription factor hasA (411 aa).

Residues 1-17 show a composition bias toward polar residues; the sequence is MTSTLPYLTSPPATHPS. Residues 1–21 are disordered; the sequence is MTSTLPYLTSPPATHPSNSDH. Positions 28–54 form a DNA-binding region, zn(2)-C6 fungal-type; the sequence is CDSCHQCKVKCSGGSPCFRCTSKGLNC.

It localises to the nucleus. In terms of biological role, transcription factor; part of the gene cluster that mediates the biosynthesis of hexadehydro-astechrome (HAS), a tryptophan-derived iron(III)-complex that acts as a virulence factor in infected mice. Positively regulates the expression of the HAS biosynthetic genes. The protein is C6 finger domain transcription factor hasA of Aspergillus fumigatus (strain CBS 144.89 / FGSC A1163 / CEA10) (Neosartorya fumigata).